A 941-amino-acid polypeptide reads, in one-letter code: Probable respiratory burst oxidase homolog protein I (941 aa).

Over 1–374 the chain is Cytoplasmic; sequence MSMSFSGGTH…LYSLQDNWKR (374 aa). Disordered regions lie at residues 29-48 and 103-166; these read PSLP…SGEE and ERLT…SGTE. A compositionally biased stretch (low complexity) spans 36 to 45; it reads SPSPSSSSSS. Over residues 103–117 the composition is skewed to polar residues; the sequence is ERLTAGTNSKQQIQK. EF-hand-like stretches follow at residues 196–204 and 232–243; these read SKDGYLFKS and RRIMVDKINLQE. Residues 254–289 enclose the EF-hand domain; that stretch reads ESFDSRLQIFFNMVKNGDGRITENEVKEIIILSASA. N269, D271, R273, and E278 together coordinate Ca(2+). Phosphoserine is present on residues S346 and S350. A helical membrane pass occupies residues 375 to 395; the sequence is IWVLTLWFVIMAWLFMWKCYQ. The Extracellular segment spans residues 396–407; that stretch reads YKHKDAFHVMGY. Residues 408 to 428 traverse the membrane as a helical segment; that stretch reads CLVMAKGAAETLKFNMALILL. The 158-residue stretch at 413–570 folds into the Ferric oxidoreductase domain; the sequence is KGAAETLKFN…LLLTVYVLLV (158 aa). At 429 to 514 the chain is on the cytoplasmic side; sequence PVCRNTITYL…YFGLVNTPVG (86 aa). A helical membrane pass occupies residues 515 to 535; the sequence is ITGIIMVAFMLIAFTLASRRC. Over 536–557 the chain is Extracellular; sequence RRNLTKLPKPFDKLTGYNAFWY. A helical transmembrane segment spans residues 558-578; it reads SHHLLLTVYVLLVIHGVSLYL. Over 579–586 the chain is Cytoplasmic; that stretch reads EHKWYRKT. Residues 587–604 form a helical membrane-spanning segment; sequence VWMYLAVPVLLYVGERIF. Over 605–731 the chain is Extracellular; the sequence is RFFRSRLYTV…PYGAPAQDHW (127 aa). Residues 609–729 enclose the FAD-binding FR-type domain; that stretch reads SRLYTVEICK…DGPYGAPAQD (121 aa). Residues 732–752 traverse the membrane as a helical segment; it reads KYDVVLLVGLGIGATPFVSIL. Over 753 to 941 the chain is Cytoplasmic; it reads RDLLNNIIKQ…TRFDFHKEQF (189 aa).

It belongs to the RBOH (TC 5.B.1.3) family. As to quaternary structure, monomer and homodimer.

The protein resides in the membrane. In terms of biological role, calcium-dependent NADPH oxidase that generates superoxide. This chain is Probable respiratory burst oxidase homolog protein I (RBOHI), found in Arabidopsis thaliana (Mouse-ear cress).